Reading from the N-terminus, the 986-residue chain is Leucine-rich repeat receptor-like kinase protein HAR1 (986 aa).

An N-terminal signal peptide occupies residues 1-25 (MRIRVSYLLVLCFTLIWFRWTVVYS). LRR repeat units follow at residues 71–97 (DQNL…IGLL), 98–121 (EKLE…LASL), 123–145 (SLKV…ITVG), 146–170 (MTEL…IVKL), 171–196 (EKLK…EFQS), 198–218 (EFLG…LAKL), 243–267 (MENL…LGNL), 268–291 (TKLH…LSSM), 293–314 (SLMS…SFSK), 316–339 (KNLT…IGDL), 340–363 (PNLE…LGGN), 365–387 (RFLY…LCKS), 388–411 (GRLK…IGEC), 412–435 (RSLT…VFQL), 437–458 (SVTI…VISG), 459–482 (ESLG…MKNL), 483–506 (RALQ…VFEI), 508–530 (MLTK…ITHR), 531–554 (ASLT…MKNL), 555–578 (MDLS…IRFM), and 579–603 (TSLT…QFLV). N-linked (GlcNAc...) asparagine glycans are attached at residues Asn-80, Asn-102, Asn-109, Asn-128, and Asn-141. N-linked (GlcNAc...) asparagine glycosylation is found at Asn-255, Asn-266, and Asn-279. Asn-317 and Asn-351 each carry an N-linked (GlcNAc...) asparagine glycan. Asn-513 and Asn-518 each carry an N-linked (GlcNAc...) asparagine glycan. Residues Asn-561 and Asn-590 are each glycosylated (N-linked (GlcNAc...) asparagine). Residues 645-665 (IVIGIALATAVLLVAVTVHVV) form a helical membrane-spanning segment. The region spanning 695 to 971 (LKEENIIGKG…TMREVVHMLT (277 aa)) is the Protein kinase domain. Residues 701-709 (IGKGGAGIV) and Lys-723 each bind ATP. Asp-820 acts as the Proton acceptor in catalysis.

This sequence belongs to the protein kinase superfamily. Ser/Thr protein kinase family. Expressed in roots, leaves, stems and flowers.

The protein localises to the cell membrane. The catalysed reaction is L-seryl-[protein] + ATP = O-phospho-L-seryl-[protein] + ADP + H(+). It carries out the reaction L-threonyl-[protein] + ATP = O-phospho-L-threonyl-[protein] + ADP + H(+). Functionally, LRR receptor kinase involved in the regulation of root and shoot growth, and root nodule organogenesis. Involved in long distance nodulation signaling events. Involved in the autoregulation of nodulation (AON), a long distance systemic signaling from root to shoot and back again, which allows legumes to limit the number of root nodules formed based on available nitrogen and previous rhizobial colonization. Acts from shoot to root to control AON. Involved in the regulation of root colonization by arbuscular mycorrhizal (AM) fungi. The chain is Leucine-rich repeat receptor-like kinase protein HAR1 from Lotus japonicus (Lotus corniculatus var. japonicus).